The primary structure comprises 415 residues: Lipoyl synthase, mitochondrial (415 aa).

Residues 1 to 32 constitute a mitochondrion transit peptide; sequence MAVSTSHFRSLCASSRSLSRTGIVAPISCRGY. Residues 30-50 form a disordered region; it reads RGYATTEPSPSATSTTTTTTA. Residues 33–49 show a composition bias toward low complexity; sequence ATTEPSPSATSTTTTTT. Residues cysteine 132, cysteine 137, cysteine 143, cysteine 163, cysteine 167, cysteine 170, and serine 378 each coordinate [4Fe-4S] cluster. The region spanning 146-367 is the Radical SAM core domain; the sequence is GSDKSAATAT…RQRALDMGFL (222 aa).

Belongs to the radical SAM superfamily. Lipoyl synthase family. The cofactor is [4Fe-4S] cluster.

The protein localises to the mitochondrion. The catalysed reaction is [[Fe-S] cluster scaffold protein carrying a second [4Fe-4S](2+) cluster] + N(6)-octanoyl-L-lysyl-[protein] + 2 oxidized [2Fe-2S]-[ferredoxin] + 2 S-adenosyl-L-methionine + 4 H(+) = [[Fe-S] cluster scaffold protein] + N(6)-[(R)-dihydrolipoyl]-L-lysyl-[protein] + 4 Fe(3+) + 2 hydrogen sulfide + 2 5'-deoxyadenosine + 2 L-methionine + 2 reduced [2Fe-2S]-[ferredoxin]. It participates in protein modification; protein lipoylation via endogenous pathway; protein N(6)-(lipoyl)lysine from octanoyl-[acyl-carrier-protein]: step 2/2. In terms of biological role, catalyzes the radical-mediated insertion of two sulfur atoms into the C-6 and C-8 positions of the octanoyl moiety bound to the lipoyl domains of lipoate-dependent enzymes, thereby converting the octanoylated domains into lipoylated derivatives. The chain is Lipoyl synthase, mitochondrial from Neosartorya fischeri (strain ATCC 1020 / DSM 3700 / CBS 544.65 / FGSC A1164 / JCM 1740 / NRRL 181 / WB 181) (Aspergillus fischerianus).